The chain runs to 190 residues: Peptidyl-tRNA hydrolase (190 aa).

F14 is a tRNA binding site. H19 serves as the catalytic Proton acceptor. TRNA-binding residues include M64, N66, and N112.

It belongs to the PTH family. Monomer.

The protein localises to the cytoplasm. The catalysed reaction is an N-acyl-L-alpha-aminoacyl-tRNA + H2O = an N-acyl-L-amino acid + a tRNA + H(+). Hydrolyzes ribosome-free peptidyl-tRNAs (with 1 or more amino acids incorporated), which drop off the ribosome during protein synthesis, or as a result of ribosome stalling. In terms of biological role, catalyzes the release of premature peptidyl moieties from peptidyl-tRNA molecules trapped in stalled 50S ribosomal subunits, and thus maintains levels of free tRNAs and 50S ribosomes. The chain is Peptidyl-tRNA hydrolase from Staphylococcus aureus (strain Mu3 / ATCC 700698).